Reading from the N-terminus, the 390-residue chain is Phosphopentomutase (390 aa).

Residues aspartate 11, aspartate 283, histidine 288, aspartate 324, histidine 325, and histidine 336 each coordinate Mn(2+).

Belongs to the phosphopentomutase family. The cofactor is Mn(2+).

The protein resides in the cytoplasm. It carries out the reaction 2-deoxy-alpha-D-ribose 1-phosphate = 2-deoxy-D-ribose 5-phosphate. The catalysed reaction is alpha-D-ribose 1-phosphate = D-ribose 5-phosphate. The protein operates within carbohydrate degradation; 2-deoxy-D-ribose 1-phosphate degradation; D-glyceraldehyde 3-phosphate and acetaldehyde from 2-deoxy-alpha-D-ribose 1-phosphate: step 1/2. In terms of biological role, isomerase that catalyzes the conversion of deoxy-ribose 1-phosphate (dRib-1-P) and ribose 1-phosphate (Rib-1-P) to deoxy-ribose 5-phosphate (dRib-5-P) and ribose 5-phosphate (Rib-5-P), respectively. The polypeptide is Phosphopentomutase (Clostridium acetobutylicum (strain ATCC 824 / DSM 792 / JCM 1419 / IAM 19013 / LMG 5710 / NBRC 13948 / NRRL B-527 / VKM B-1787 / 2291 / W)).